Reading from the N-terminus, the 161-residue chain is Lipoprotein signal peptidase (161 aa).

The next 3 helical transmembrane spans lie at 6–26 (ILFL…KFYV), 67–87 (GLFF…YLIK), and 90–110 (VSDL…MGNL). Residues Asp-121 and Asp-139 contribute to the active site. A helical transmembrane segment spans residues 134–154 (AFNIADTAISIGVLFLVVDMI).

It belongs to the peptidase A8 family.

The protein localises to the cell inner membrane. The catalysed reaction is Release of signal peptides from bacterial membrane prolipoproteins. Hydrolyzes -Xaa-Yaa-Zaa-|-(S,diacylglyceryl)Cys-, in which Xaa is hydrophobic (preferably Leu), and Yaa (Ala or Ser) and Zaa (Gly or Ala) have small, neutral side chains.. Its pathway is protein modification; lipoprotein biosynthesis (signal peptide cleavage). In terms of biological role, this protein specifically catalyzes the removal of signal peptides from prolipoproteins. The polypeptide is Lipoprotein signal peptidase (Syntrophus aciditrophicus (strain SB)).